The following is an 830-amino-acid chain: Leucine--tRNA ligase (830 aa).

Residues 42 to 52 (PYPSGNLHMGH) carry the 'HIGH' region motif. Positions 585–589 (KMSKS) match the 'KMSKS' region motif. K588 provides a ligand contact to ATP.

It belongs to the class-I aminoacyl-tRNA synthetase family.

The protein localises to the cytoplasm. The catalysed reaction is tRNA(Leu) + L-leucine + ATP = L-leucyl-tRNA(Leu) + AMP + diphosphate. The chain is Leucine--tRNA ligase from Halothermothrix orenii (strain H 168 / OCM 544 / DSM 9562).